Reading from the N-terminus, the 431-residue chain is MTNLLWQKPGVAVDAKIQTFLAGDDVILDREFFLYDIAASKAHAQGLQHIGILSLEELGGLSEQLDLLADDFRSGAFVLDAHYEDCHSAIEARLTECLGDAGRKIHTGRSRNDQILVATRLWLKDKLQRVAALSTEVAKVALDRAQAEAELPVPGYTHIQRAVVSSAGMWWAGWAEAFIDNAVRANDTFKLVDTNPLGTAAGYGVNLPLDRAHTTAELGFARLQVSPIYAQLSRGKFELAALEALGGATLDLRRIAWDLSLFTSGEFAFVALPAQYTTGSSIMPNKRNPDVIELMRATHASVAAARTEIEQLLSLPSGYHRDLQSSKGAIVHGFARGLAALELLPALLANLEWRPDKLRSAIDSGMYATDVAVEAAVAGVPFRDAYKAAAAASDSAGQGRTPEGSLAARVSPGAAADLQLDVLRARWEALQ.

It belongs to the lyase 1 family. Argininosuccinate lyase subfamily.

It localises to the cytoplasm. The enzyme catalyses 2-(N(omega)-L-arginino)succinate = fumarate + L-arginine. It participates in amino-acid biosynthesis; L-arginine biosynthesis; L-arginine from L-ornithine and carbamoyl phosphate: step 3/3. In Xanthomonas campestris pv. campestris (strain ATCC 33913 / DSM 3586 / NCPPB 528 / LMG 568 / P 25), this protein is Argininosuccinate lyase.